Reading from the N-terminus, the 354-residue chain is Elongation factor Ts (354 aa).

Positions 81 to 84 (TDFV) are involved in Mg(2+) ion dislocation from EF-Tu.

Belongs to the EF-Ts family.

Its subcellular location is the cytoplasm. In terms of biological role, associates with the EF-Tu.GDP complex and induces the exchange of GDP to GTP. It remains bound to the aminoacyl-tRNA.EF-Tu.GTP complex up to the GTP hydrolysis stage on the ribosome. The protein is Elongation factor Ts of Campylobacter curvus (strain 525.92).